A 71-amino-acid chain; its full sequence is Small ribosomal subunit protein bS21 (71 aa).

This sequence belongs to the bacterial ribosomal protein bS21 family.

The protein is Small ribosomal subunit protein bS21 of Shewanella piezotolerans (strain WP3 / JCM 13877).